A 290-amino-acid chain; its full sequence is 33 kDa chaperonin (290 aa).

2 disulfide bridges follow: C235/C237 and C268/C271.

The protein belongs to the HSP33 family. Post-translationally, under oxidizing conditions two disulfide bonds are formed involving the reactive cysteines. Under reducing conditions zinc is bound to the reactive cysteines and the protein is inactive.

It is found in the cytoplasm. In terms of biological role, redox regulated molecular chaperone. Protects both thermally unfolding and oxidatively damaged proteins from irreversible aggregation. Plays an important role in the bacterial defense system toward oxidative stress. The chain is 33 kDa chaperonin from Streptococcus pyogenes serotype M5 (strain Manfredo).